We begin with the raw amino-acid sequence, 288 residues long: Probable endonuclease 4 (288 aa).

The Zn(2+) site is built by His75, His115, Glu153, Asp187, His190, His224, Asp237, His239, and Glu269.

The protein belongs to the AP endonuclease 2 family. Zn(2+) is required as a cofactor.

The enzyme catalyses Endonucleolytic cleavage to 5'-phosphooligonucleotide end-products.. Functionally, endonuclease IV plays a role in DNA repair. It cleaves phosphodiester bonds at apurinic or apyrimidinic (AP) sites, generating a 3'-hydroxyl group and a 5'-terminal sugar phosphate. The chain is Probable endonuclease 4 from Chlamydia muridarum (strain MoPn / Nigg).